A 604-amino-acid chain; its full sequence is Putative O-acetyltransferase SAR0937 (604 aa).

11 helical membrane passes run 15–35 (YMPG…IYHL), 43–63 (GFLG…SLLL), 85–105 (LLPA…LLKS), 150–170 (AIEE…LLTI), 176–196 (IGFI…FIYS), 212–232 (LQTL…KLKN), 240–260 (YVID…FFII), 267–287 (IYDG…ASVV), 310–330 (YSLY…YVDG), 332–352 (IPVY…ELSY), and 377–397 (FIRM…LVGA). Residues Ser459, Asp581, and His584 contribute to the active site.

It belongs to the acyltransferase 3 family.

The protein resides in the cell membrane. In Staphylococcus aureus (strain MRSA252), this protein is Putative O-acetyltransferase SAR0937.